We begin with the raw amino-acid sequence, 379 residues long: MMGSTNSLFNQPNDSHFDDLFNGTTISNFHNQISDKISDSFTLVDSSDTVLIDGCHDDPYDTVIIISRNSDIQKICHKYHINYPVRLHTIRCHCDKICSAIRRLDTNIRHSVVYTIEKMYPDKRYESYPNRIHICDTVRNSKIFDSKKFLGQLFGDDLYYKKFFVKEYFEKYSDKHLHQTIRTRQLLDEIPSVCMCNSFTQSVNNLNAGIVLLGDKHQLEPISLIFNQRVRKTEFSELFVYNTKDIDNISHRNSNHTLKRLKESKKLNKLSDYHTLLGNEINVFNREILSFSFGKREWYVDHTETSFECAKRELFEEFNIQISSNIFKYNKKLLESEPNKLKHIIDHESVLFFVYLPHILYVTYDVDSDTIFLDTEPLI.

This is an uncharacterized protein from Acanthamoeba polyphaga (Amoeba).